Here is a 399-residue protein sequence, read N- to C-terminus: Phosphoglycerate kinase (399 aa).

Substrate contacts are provided by residues 22-24, Arg-38, 61-64, Arg-120, and Arg-153; these read DFN and HLGR. Residues Lys-204, Glu-326, and 352 to 355 contribute to the ATP site; that span reads GGDT.

The protein belongs to the phosphoglycerate kinase family. Monomer.

It localises to the cytoplasm. The catalysed reaction is (2R)-3-phosphoglycerate + ATP = (2R)-3-phospho-glyceroyl phosphate + ADP. Its pathway is carbohydrate degradation; glycolysis; pyruvate from D-glyceraldehyde 3-phosphate: step 2/5. This chain is Phosphoglycerate kinase, found in Geotalea uraniireducens (strain Rf4) (Geobacter uraniireducens).